We begin with the raw amino-acid sequence, 404 residues long: 11-beta-hydroxysteroid dehydrogenase type 2 (404 aa).

82–111 is a binding site for NAD(+); it reads TRAVLITGCDSGFGNATAKKLDTMGFTVLA. Ser219 is a substrate binding site. Catalysis depends on Tyr232, which acts as the Proton acceptor. Residues 383-404 are disordered; that stretch reads LTSARDIAQDQGPRPDPSPTAQ.

It belongs to the short-chain dehydrogenases/reductases (SDR) family. As to quaternary structure, interacts with ligand-free cytoplasmic NR3C2. In terms of tissue distribution, highly expressed in kidney, adrenal and colon; detected at lower levels on lung, liver, and spleen. Expressed in oocytes. Expressed in uterine tissues and in corpora lutea.

It localises to the microsome. The protein resides in the endoplasmic reticulum. The catalysed reaction is an 11beta-hydroxysteroid + NAD(+) = an 11-oxosteroid + NADH + H(+). The enzyme catalyses corticosterone + NAD(+) = 11-dehydrocorticosterone + NADH + H(+). It catalyses the reaction cortisol + NAD(+) = cortisone + NADH + H(+). It carries out the reaction 11beta,17beta-dihydroxyandrost-4-ene-3-one + NAD(+) = 17beta-hydroxyandrost-4-ene-3,11-dione + NADH + H(+). The catalysed reaction is 11beta-hydroxyandrost-4-ene-3,17-dione + NAD(+) = androst-4-ene-3,11,17-trione + NADH + H(+). It functions in the pathway steroid metabolism. Its activity is regulated as follows. Inhibited by glycyrrhetinic acid, carbenoloxone, 11-alpha-OH-progesterone and 11-beta-OH-progesterone. Catalyzes the conversion of biologically active 11beta-hydroxyglucocorticoids (11beta-hydroxysteroid) such as cortisol, to inactive 11-ketoglucocorticoids (11-oxosteroid) such as cortisone, in the presence of NAD(+). Functions as a dehydrogenase (oxidase), thereby decreasing the concentration of active glucocorticoids, thus protecting the nonselective mineralocorticoid receptor from occupation by glucocorticoids. Affinity towards corticosterone is higher than cortisol or dexamethasone. Plays an important role in maintaining glucocorticoids balance during preimplantation and protects the fetus from excessive maternal corticosterone exposure. Catalyzes the oxidation of 11beta-hydroxytestosterone (11beta,17beta-dihydroxyandrost-4-ene-3-one) to 11-ketotestosterone (17beta-hydroxyandrost-4-ene-3,11-dione), a major bioactive androgen. Catalyzes the conversion of 11beta-hydroxyandrostenedione (11beta-hydroxyandrost-4-ene-3,17-dione) to 11-ketoandrostenedione (androst-4-ene-3,11,17-trione), which can be further metabolized to 11-ketotestosterone. Converts 7-beta-25-dihydroxycholesterol to 7-oxo-25-hydroxycholesterol in vitro. 7-beta-25-dihydroxycholesterol (not 7-oxo-25-hydroxycholesterol) acts as ligand for the G-protein-coupled receptor (GPCR) Epstein-Barr virus-induced gene 2 (EBI2) and may thereby regulate immune cell migration. May protect ovulating oocytes and fertilizing spermatozoa from the adverse effects of cortisol. This Bos taurus (Bovine) protein is 11-beta-hydroxysteroid dehydrogenase type 2 (HSD11B2).